Consider the following 906-residue polypeptide: Centromere protein C (906 aa).

Composition is skewed to polar residues over residues 56 to 74 and 87 to 96; these read SLTS…SSSK and SSRTGEASLQ. Disordered regions lie at residues 56-115 and 141-169; these read SLTS…NEVH and QKAA…NKNI. 2 positions are modified to phosphoserine: S71 and S94. A compositionally biased stretch (low complexity) spans 97–108; the sequence is ASAEPSEAAGGS. Glycyl lysine isopeptide (Lys-Gly) (interchain with G-Cter in SUMO2) cross-links involve residues K150 and K182. Positions 197–224 are disordered; that stretch reads VEDNLSKGQEGTSSEITQKRDDLSSDVQ. Positions 202–212 are enriched in polar residues; it reads SKGQEGTSSEI. The short motif at 228–242 is the Nuclear localization signal element; that stretch reads KKNFSELFLETVKRK. Residues K229, K240, K242, and K266 each participate in a glycyl lysine isopeptide (Lys-Gly) (interchain with G-Cter in SUMO2) cross-link. 3 disordered regions span residues 294-320, 341-596, and 623-671; these read RHLS…KSHS, AQLS…SLAI, and EYTS…EQDQ. Residues S302, S344, S363, and S404 each carry the phosphoserine modification. Residues 402 to 424 are compositionally biased toward polar residues; sequence GQSSWENSNVSNTGQDKLQINSK. Over residues 426–450 the composition is skewed to basic and acidic residues; the sequence is NMKDCEEVRNEPNPKKQKPALENKK. The Nuclear localization signal motif lies at 449–466; the sequence is KKKTNSTQTNKEKSGKKF. Over residues 465–474 the composition is skewed to low complexity; sequence KFFSGGSKNK. Residues 481–494 show a composition bias toward polar residues; the sequence is TLTSRRSCRISQRP. A Phosphoserine modification is found at S495. Residues 496–512 are compositionally biased toward basic and acidic residues; that stretch reads EWWRVKSDESSVDRNPS. K501 participates in a covalent cross-link: Glycyl lysine isopeptide (Lys-Gly) (interchain with G-Cter in SUMO2). S505 bears the Phosphoserine mark. The segment covering 523–546 has biased composition (basic residues); that stretch reads NKKKQTKRNHVSKRAGKKPGSSKR. The short motif at 525–540 is the Nuclear localization signal element; sequence KKQTKRNHVSKRAGKK. Residues 626–637 are compositionally biased toward polar residues; the sequence is SKTQMESASNSE. Residue K640 forms a Glycyl lysine isopeptide (Lys-Gly) (interchain with G-Cter in SUMO2) linkage. 2 positions are modified to phosphoserine: S647 and S673. K692 is covalently cross-linked (Glycyl lysine isopeptide (Lys-Gly) (interchain with G-Cter in SUMO2)). Residues 702–724 form an MIF2 homology domain II region; sequence VRRSNRIRLKPLEYWRGERVDYQ. Phosphoserine occurs at positions 728 and 737. Positions 744–762 match the Nuclear localization signal motif; sequence KIKAQRNLGKVNKKVTKKP. A Glycyl lysine isopeptide (Lys-Gly) (interchain with G-Cter in SUMO2) cross-link involves residue K770. The MIF2 homology domain III stretch occupies residues 853–906; it reads LVFYVNFGDLLCTLHETPYKLTTGDSFYVPSGNHYNIKNLLNVESSLLFTQIKR.

The protein belongs to the CENP-C/MIF2 family. Oligomer. Component of the CENPA-NAC complex, at least composed of CENPA, CENPC, CENPH, CENPM, CENPN, CENPT and CENPU. The CENPA-NAC complex interacts with the CENPA-CAD complex, composed of CENPI, CENPK, CENPL, CENPO, CENPP, CENPQ, CENPR and CENPS. Binds to DAXX. Interacts with DNMT3B. Interacts directly with CENPA. Identified in a centromere complex containing histones H2A, H2B and H4, and at least CENPA, CENPB, CENPC, CENPT, CENPN, HJURP, SUPT16H, SSRP1 and RSF1. Interacts with MEIKIN.

Its subcellular location is the nucleus. It is found in the chromosome. The protein resides in the centromere. The protein localises to the kinetochore. Component of the CENPA-NAC (nucleosome-associated) complex, a complex that plays a central role in assembly of kinetochore proteins, mitotic progression and chromosome segregation. The CENPA-NAC complex recruits the CENPA-CAD (nucleosome distal) complex and may be involved in incorporation of newly synthesized CENPA into centromeres. CENPC recruits DNA methylation and DNMT3B to both centromeric and pericentromeric satellite repeats and regulates the histone code in these regions. The polypeptide is Centromere protein C (Cenpc) (Mus musculus (Mouse)).